Reading from the N-terminus, the 310-residue chain is Zinc finger protein 346 (310 aa).

Met1 bears the N-acetylmethionine mark. Positions 1-12 (MEYPAPAAVQAA) are enriched in low complexity. A disordered region spans residues 1–33 (MEYPAPAAVQAADGGGAGPYNSSELLEGQEPDG). The Matrin-type 1 zinc-finger motif lies at 70–104 (FTNTQCKVCCALLISESQKLAHYQSKKHANKVKRY). Residues Cys75, Cys78, His91, and His97 each contribute to the Zn(2+) site. Residue Lys114 forms a Glycyl lysine isopeptide (Lys-Gly) (interchain with G-Cter in SUMO2) linkage. The segment at 131-165 (DKNQCCPICNMTFSSPVVAQSHYLGKTHAKNLKLK) adopts a Matrin-type 2 zinc-finger fold. Positions 136, 139, 152, and 158 each coordinate Zn(2+). Lys170 participates in a covalent cross-link: Glycyl lysine isopeptide (Lys-Gly) (interchain with G-Cter in SUMO2). 2 consecutive Matrin-type zinc fingers follow at residues 198 to 232 (DPDK…ETKL) and 252 to 286 (GKGY…SPKT). Residues 278–310 (KHKNQSPKTVASSLGQIPMQRQPIQKDSTTLED) form a disordered region. Composition is skewed to polar residues over residues 283 to 292 (SPKTVASSLG) and 299 to 310 (QPIQKDSTTLED).

As to quaternary structure, forms a heteromeric complex with XPO5 and ILF3. Found in a nuclear export complex with XPO5, RAN, ILF3, ZNF346 and double-stranded RNA. Interacts with XPO5. Interacts with ILF3 in an RNA-independent manner.

The protein resides in the nucleus. It localises to the nucleolus. It is found in the cytoplasm. Its function is as follows. Binds with low affinity to dsDNA and ssRNA, and with high affinity to dsRNA, with no detectable sequence specificity. This Pongo abelii (Sumatran orangutan) protein is Zinc finger protein 346 (ZNF346).